Consider the following 94-residue polypeptide: Pyrimidine/purine nucleoside phosphorylase 2 (94 aa).

It belongs to the nucleoside phosphorylase PpnP family.

It carries out the reaction a purine D-ribonucleoside + phosphate = a purine nucleobase + alpha-D-ribose 1-phosphate. The enzyme catalyses adenosine + phosphate = alpha-D-ribose 1-phosphate + adenine. The catalysed reaction is cytidine + phosphate = cytosine + alpha-D-ribose 1-phosphate. It catalyses the reaction guanosine + phosphate = alpha-D-ribose 1-phosphate + guanine. It carries out the reaction inosine + phosphate = alpha-D-ribose 1-phosphate + hypoxanthine. The enzyme catalyses thymidine + phosphate = 2-deoxy-alpha-D-ribose 1-phosphate + thymine. The catalysed reaction is uridine + phosphate = alpha-D-ribose 1-phosphate + uracil. It catalyses the reaction xanthosine + phosphate = alpha-D-ribose 1-phosphate + xanthine. In terms of biological role, catalyzes the phosphorolysis of diverse nucleosides, yielding D-ribose 1-phosphate and the respective free bases. Can use uridine, adenosine, guanosine, cytidine, thymidine, inosine and xanthosine as substrates. Also catalyzes the reverse reactions. This Psychrobacter arcticus (strain DSM 17307 / VKM B-2377 / 273-4) protein is Pyrimidine/purine nucleoside phosphorylase 2.